A 113-amino-acid polypeptide reads, in one-letter code: Hydrogenase maturation factor HypA (113 aa).

A Ni(2+)-binding site is contributed by H2. Zn(2+) contacts are provided by C70, C73, C86, and C88.

The protein belongs to the HypA/HybF family.

In terms of biological role, involved in the maturation of [NiFe] hydrogenases. Required for nickel insertion into the metal center of the hydrogenase. In Trichormus variabilis (strain ATCC 29413 / PCC 7937) (Anabaena variabilis), this protein is Hydrogenase maturation factor HypA.